The chain runs to 224 residues: Inhibitor of apoptosis protein (224 aa).

A BIR repeat occupies 29-92 (IDARNQSFAI…GFWSRNCGFM (64 aa)). Zn(2+) is bound by residues Cys-62, Cys-65, His-82, and Cys-89.

It belongs to the asfivirus IAP family. Interacts with subunit p17 of host CASP3.

The protein localises to the host cytoplasm. Its subcellular location is the virion. Its function is as follows. Prevent apoptosis of host cell by inhibiting caspase-3/CASP3 activation to promote the viral replication. Also induces the activation of host NF-kappaB. The chain is Inhibitor of apoptosis protein (p27) from African swine fever virus (isolate Pig/Haiti/H811/1981) (ASFV).